The chain runs to 377 residues: Queuine tRNA-ribosyltransferase (377 aa).

D93 serves as the catalytic Proton acceptor. Residues 93–97 (DSGGF), D147, Q191, and G218 each bind substrate. Positions 249 to 255 (GVGTPLD) are RNA binding. D268 (nucleophile) is an active-site residue. Residues 273 to 277 (TRNAR) form an RNA binding; important for wobble base 34 recognition region. Residues C306, C308, C311, and H337 each contribute to the Zn(2+) site.

This sequence belongs to the queuine tRNA-ribosyltransferase family. In terms of assembly, homodimer. Within each dimer, one monomer is responsible for RNA recognition and catalysis, while the other monomer binds to the replacement base PreQ1. Requires Zn(2+) as cofactor.

The enzyme catalyses 7-aminomethyl-7-carbaguanine + guanosine(34) in tRNA = 7-aminomethyl-7-carbaguanosine(34) in tRNA + guanine. It functions in the pathway tRNA modification; tRNA-queuosine biosynthesis. Catalyzes the base-exchange of a guanine (G) residue with the queuine precursor 7-aminomethyl-7-deazaguanine (PreQ1) at position 34 (anticodon wobble position) in tRNAs with GU(N) anticodons (tRNA-Asp, -Asn, -His and -Tyr). Catalysis occurs through a double-displacement mechanism. The nucleophile active site attacks the C1' of nucleotide 34 to detach the guanine base from the RNA, forming a covalent enzyme-RNA intermediate. The proton acceptor active site deprotonates the incoming PreQ1, allowing a nucleophilic attack on the C1' of the ribose to form the product. After dissociation, two additional enzymatic reactions on the tRNA convert PreQ1 to queuine (Q), resulting in the hypermodified nucleoside queuosine (7-(((4,5-cis-dihydroxy-2-cyclopenten-1-yl)amino)methyl)-7-deazaguanosine). The protein is Queuine tRNA-ribosyltransferase of Oleidesulfovibrio alaskensis (strain ATCC BAA-1058 / DSM 17464 / G20) (Desulfovibrio alaskensis).